Here is a 257-residue protein sequence, read N- to C-terminus: Type III pantothenate kinase (257 aa).

Position 6–13 (6–13 (DVGNTNTV)) interacts with ATP. Substrate contacts are provided by residues Y100 and 107–110 (GADR). Residue D109 is the Proton acceptor of the active site. D129 contacts K(+). Position 132 (T132) interacts with ATP. T185 is a binding site for substrate.

Belongs to the type III pantothenate kinase family. Homodimer. NH4(+) serves as cofactor. K(+) is required as a cofactor.

It is found in the cytoplasm. It catalyses the reaction (R)-pantothenate + ATP = (R)-4'-phosphopantothenate + ADP + H(+). It participates in cofactor biosynthesis; coenzyme A biosynthesis; CoA from (R)-pantothenate: step 1/5. Functionally, catalyzes the phosphorylation of pantothenate (Pan), the first step in CoA biosynthesis. In Desulfatibacillum aliphaticivorans, this protein is Type III pantothenate kinase.